The sequence spans 205 residues: Holliday junction branch migration complex subunit RuvA (205 aa).

Positions 1–64 are domain I; it reads MIGRLRGLLV…EDAQLLYGFI (64 aa). Residues 65–143 form a domain II region; it reads TKQERALFRL…SLMEASAGSE (79 aa). The interval 144–156 is flexible linker; sequence REFMLKSNYTPAP. A domain III region spans residues 157-205; sequence VINTAEEDAIAALLSLGYKPAQASKAVSAVYQDGMDSETLIKSSLKSML.

It belongs to the RuvA family. In terms of assembly, homotetramer. Forms an RuvA(8)-RuvB(12)-Holliday junction (HJ) complex. HJ DNA is sandwiched between 2 RuvA tetramers; dsDNA enters through RuvA and exits via RuvB. An RuvB hexamer assembles on each DNA strand where it exits the tetramer. Each RuvB hexamer is contacted by two RuvA subunits (via domain III) on 2 adjacent RuvB subunits; this complex drives branch migration. In the full resolvosome a probable DNA-RuvA(4)-RuvB(12)-RuvC(2) complex forms which resolves the HJ.

The protein localises to the cytoplasm. The RuvA-RuvB-RuvC complex processes Holliday junction (HJ) DNA during genetic recombination and DNA repair, while the RuvA-RuvB complex plays an important role in the rescue of blocked DNA replication forks via replication fork reversal (RFR). RuvA specifically binds to HJ cruciform DNA, conferring on it an open structure. The RuvB hexamer acts as an ATP-dependent pump, pulling dsDNA into and through the RuvAB complex. HJ branch migration allows RuvC to scan DNA until it finds its consensus sequence, where it cleaves and resolves the cruciform DNA. This Shewanella sediminis (strain HAW-EB3) protein is Holliday junction branch migration complex subunit RuvA.